The sequence spans 91 residues: UPF0512 protein M (91 aa).

The protein belongs to the UPF0512 family.

The sequence is that of UPF0512 protein M from Dictyostelium discoideum (Social amoeba).